The following is a 355-amino-acid chain: Protein RecA (355 aa).

An ATP-binding site is contributed by G65–T72.

It belongs to the RecA family.

The protein resides in the cytoplasm. Can catalyze the hydrolysis of ATP in the presence of single-stranded DNA, the ATP-dependent uptake of single-stranded DNA by duplex DNA, and the ATP-dependent hybridization of homologous single-stranded DNAs. It interacts with LexA causing its activation and leading to its autocatalytic cleavage. This Pseudomonas putida (strain W619) protein is Protein RecA.